A 5255-amino-acid polypeptide reads, in one-letter code: Bacitracin synthase 1 (5255 aa).

The tract at residues 39–612 (LHELFEEQAM…IKELSAFIEA (574 aa)) is domain 1 (isoleucine-activating). The span at 519–531 (VDRKALPEPDRTA) shows a compositional bias: basic and acidic residues. A disordered region spans residues 519-542 (VDRKALPEPDRTAGAENEYEAPRN). One can recognise a Carrier 1 domain in the interval 539–614 (APRNETEEKL…ELSAFIEANH (76 aa)). Serine 574 is modified (O-(pantetheine 4'-phosphoryl)serine). The tract at residues 621–1037 (TLVTRAADPE…ITWDYVEQIF (417 aa)) is cyclization. The segment at 1109-1648 (HHDEVMTYQE…FKNDTIIALD (540 aa)) is domain 2 (cysteine-activating). 4 consecutive Carrier domains span residues 1580 to 1655 (LPEN…KNRE), 2616 to 2691 (APRD…VRRR), 3659 to 3733 (PPRN…TEET), and 5166 to 5241 (APRN…LTAE). Serine 1615, serine 2651, serine 3694, and serine 5201 each carry O-(pantetheine 4'-phosphoryl)serine. Positions 2124–2689 (GKAIHQLFEE…IKGLRDISVR (566 aa)) are domain 3 (leucine-activating). Residues 3164–3732 (DHPAVAFGDE…KDLSRFITEE (569 aa)) form a domain 4 (glutamine-activating) region. The tract at residues 4668–5249 (LHELFEEQAM…AEAESAVSEE (582 aa)) is domain 5 (isoleucine-activating).

It belongs to the ATP-dependent AMP-binding enzyme family. Large multienzyme complex of BA1, BA2 and BA3. The cofactor is pantetheine 4'-phosphate.

It catalyses the reaction L-glutamate = D-glutamate. Its pathway is antibiotic biosynthesis; bacitracin biosynthesis. In terms of biological role, activates five amino acids, incorporates two D-amino acids, releases and cyclizes the mature bacitracin. In Bacillus licheniformis, this protein is Bacitracin synthase 1 (bacA).